The chain runs to 309 residues: Ribonuclease Z (309 aa).

Zn(2+) contacts are provided by His63, His65, Asp67, His68, His145, Asp216, and His274. The Proton acceptor role is filled by Asp67.

Belongs to the RNase Z family. As to quaternary structure, homodimer. Requires Zn(2+) as cofactor.

It carries out the reaction Endonucleolytic cleavage of RNA, removing extra 3' nucleotides from tRNA precursor, generating 3' termini of tRNAs. A 3'-hydroxy group is left at the tRNA terminus and a 5'-phosphoryl group is left at the trailer molecule.. Zinc phosphodiesterase, which displays some tRNA 3'-processing endonuclease activity. Probably involved in tRNA maturation, by removing a 3'-trailer from precursor tRNA. The polypeptide is Ribonuclease Z (Streptococcus agalactiae serotype V (strain ATCC BAA-611 / 2603 V/R)).